A 451-amino-acid chain; its full sequence is uncharacterized protein (451 aa).

Positions 1-59 (MLKKNDIVEVEISDLSHDGAGIAKVDGLVFFVDNALPTEKIRMRVLKVKKNIAFGKVES) constitute a TRAM domain. Residues glutamine 283, tyrosine 312, glutamate 333, and aspartate 381 each coordinate S-adenosyl-L-methionine. Cysteine 408 functions as the Nucleophile in the catalytic mechanism.

It belongs to the class I-like SAM-binding methyltransferase superfamily. RNA M5U methyltransferase family.

This is an uncharacterized protein from Streptococcus mutans serotype c (strain ATCC 700610 / UA159).